The sequence spans 237 residues: Phosphoribosylaminoimidazole-succinocarboxamide synthase (237 aa).

The protein belongs to the SAICAR synthetase family.

It carries out the reaction 5-amino-1-(5-phospho-D-ribosyl)imidazole-4-carboxylate + L-aspartate + ATP = (2S)-2-[5-amino-1-(5-phospho-beta-D-ribosyl)imidazole-4-carboxamido]succinate + ADP + phosphate + 2 H(+). It functions in the pathway purine metabolism; IMP biosynthesis via de novo pathway; 5-amino-1-(5-phospho-D-ribosyl)imidazole-4-carboxamide from 5-amino-1-(5-phospho-D-ribosyl)imidazole-4-carboxylate: step 1/2. The protein is Phosphoribosylaminoimidazole-succinocarboxamide synthase of Oceanobacillus iheyensis (strain DSM 14371 / CIP 107618 / JCM 11309 / KCTC 3954 / HTE831).